The sequence spans 155 residues: Protein-export protein SecB (155 aa).

Belongs to the SecB family. In terms of assembly, homotetramer, a dimer of dimers. One homotetramer interacts with 1 SecA dimer.

The protein localises to the cytoplasm. In terms of biological role, one of the proteins required for the normal export of preproteins out of the cell cytoplasm. It is a molecular chaperone that binds to a subset of precursor proteins, maintaining them in a translocation-competent state. It also specifically binds to its receptor SecA. This chain is Protein-export protein SecB, found in Escherichia coli O139:H28 (strain E24377A / ETEC).